A 158-amino-acid polypeptide reads, in one-letter code: METQRASLSLGRWSLWLLLLGLALPSASAQALSYREAVLRAVDQFNERSSEANLYRLLELDPPPKEDDENPNIPKPVSFRVKETVCPRTSQQPAEQCDFKENGLVKQCVGTVTLDAVKGKINVTCEELQSVGRFKRFRKKFKKLFKKLSPVIPLLHLG.

The signal sequence occupies residues 1–29 (METQRASLSLGRWSLWLLLLGLALPSASA). Positions 30-131 (QALSYREAVL…NVTCEELQSV (102 aa)) are excised as a propeptide. Cystine bridges form between Cys-86–Cys-97 and Cys-108–Cys-125.

It belongs to the cathelicidin family.

It is found in the secreted. Exerts a potent antimicrobial activity against Gram-negative and Gram-positive bacteria, including methicillin-resistant Staphylococcus aureus, and fungi. The polypeptide is Cathelicidin-6 (CATHL6) (Bos taurus (Bovine)).